We begin with the raw amino-acid sequence, 278 residues long: Msm operon regulatory protein (278 aa).

An HTH araC/xylS-type domain is found at 176-274 (NQVKKIIHSQ…GKSPSKFRKE (99 aa)). DNA-binding regions (H-T-H motif) lie at residues 193 to 214 (NDIA…RKST) and 241 to 264 (IAEI…KNYF).

Regulatory protein for the msm operon for multiple sugar metabolism. Activates the transcription of the msmEFGK, aga, dexB and gftA genes. The chain is Msm operon regulatory protein (msmR) from Streptococcus mutans serotype c (strain ATCC 700610 / UA159).